Consider the following 561-residue polypeptide: DNA ligase B (561 aa).

Lys125 acts as the N6-AMP-lysine intermediate in catalysis.

This sequence belongs to the NAD-dependent DNA ligase family. LigB subfamily.

The enzyme catalyses NAD(+) + (deoxyribonucleotide)n-3'-hydroxyl + 5'-phospho-(deoxyribonucleotide)m = (deoxyribonucleotide)n+m + AMP + beta-nicotinamide D-nucleotide.. Catalyzes the formation of phosphodiester linkages between 5'-phosphoryl and 3'-hydroxyl groups in double-stranded DNA using NAD as a coenzyme and as the energy source for the reaction. The sequence is that of DNA ligase B from Salmonella paratyphi B (strain ATCC BAA-1250 / SPB7).